The following is a 492-amino-acid chain: MKKLKITGLSLIISGLLMAQAQAAEPVYPDQLRLFSLGQEVCGDKYRPVNREEAQSIKSNIVGMMGQWQISGLANGWVIMGPGYNGEIKPGSASSTWCYPTNPATGEIPTLSALDIPDGDEVDVQWRLVHDSANFIKPTSYLAHYLGYAWVGGNHSQYVGEDMDVTRDGDGWVIRGNNDGGCDGYRCGDKTSIKVSNFAYNLDPDSFKHGDVTQSDRQLVKTVVGWAINDSDTPQSGYDVTLRYDTATNWSKTNTYGLSEKVTTKNKFKWPLVGETELSIEIAANQSWASQNGGSTTTSLSQSVRPTVPAHSKIPVKIELYKADISYPYEFKADVSYDLTLSGFLRWGGNAWYTHPDNRPNWNHTFVIGPYKDKASSIRYQWDKRYIPGEVKWWDWNWTIQQNGLPTMQNNLAKVLRPVRAGITGDFSAESQFAGNIEIGAPVPVAAASHSSRARNLSAGQGLRLEIPLDAQELSGLGFNNVSLSVTPAANQ.

A signal peptide spans 1–23 (MKKLKITGLSLIISGLLMAQAQA). Disulfide bonds link Cys-42/Cys-98 and Cys-182/Cys-187. The interval 68–84 (WQISGLANGWVIMGPGY) is interaction with host N-linked glycan. The part of the transmembrane beta-barrel after proteolytic activation of the toxin and insertion into the host membrane stretch occupies residues 256 to 288 (YGLSEKVTTKNKFKWPLVGETELSIEIAANQSW). Positions 346–355 (RWGGNAWYTH) are interaction with glycans from host GPI-anchor. The propeptide occupies 446–492 (AAASHSSRARNLSAGQGLRLEIPLDAQELSGLGFNNVSLSVTPAANQ).

Belongs to the aerolysin family. In terms of assembly, homodimer in solution; homoheptamer in the host membrane. After binding to GPI-anchored proteins in target membranes and proteolytic removal of the C-terminal propeptide, the protein assembles into a heptameric pre-pore complex. A further conformation change leads to insertion into the host membrane. In terms of processing, proteolytic cleavage and subsequent release of the propeptide trigger a major conformation change, leading to the formation of a heptameric pre-pore that then inserts into the host membrane.

The protein localises to the secreted. It is found in the host cell membrane. Functionally, secreted, cytolytic toxin that forms pores in host membranes after proteolytic removal of a C-terminal propeptide, leading to destruction of the membrane permeability barrier and cell death. The pores are formed by transmembrane beta-strands and are approximately 3 nm in diameter. This Aeromonas hydrophila protein is Aerolysin-4 (ahh4).